A 194-amino-acid polypeptide reads, in one-letter code: MPKLILASTSPWRRALLEKLQISFECAAPEVDETPHSDESPRQLVLRLAQEKAQSLASRYPDHLIIGSDQVCVLDGEITGKPLTEENARLQLRKASGNIVTFYTGLALFNSANGHLQTEVEPFDVHFRHLSEAEIDNYVRKEHPLHCAGSFKSEGFGITLFERLEGRDPNTLVGLPLIALCQMLRREGKNPLMG.

The active-site Proton acceptor is Asp-69.

Belongs to the Maf family. YceF subfamily. A divalent metal cation serves as cofactor.

Its subcellular location is the cytoplasm. The enzyme catalyses N(7)-methyl-GTP + H2O = N(7)-methyl-GMP + diphosphate + H(+). In terms of biological role, nucleoside triphosphate pyrophosphatase that hydrolyzes 7-methyl-GTP (m(7)GTP). May have a dual role in cell division arrest and in preventing the incorporation of modified nucleotides into cellular nucleic acids. The polypeptide is 7-methyl-GTP pyrophosphatase (yceF) (Escherichia coli O157:H7).